A 570-amino-acid polypeptide reads, in one-letter code: Proline--tRNA ligase (570 aa).

This sequence belongs to the class-II aminoacyl-tRNA synthetase family. ProS type 1 subfamily. In terms of assembly, homodimer.

The protein localises to the cytoplasm. The catalysed reaction is tRNA(Pro) + L-proline + ATP = L-prolyl-tRNA(Pro) + AMP + diphosphate. Functionally, catalyzes the attachment of proline to tRNA(Pro) in a two-step reaction: proline is first activated by ATP to form Pro-AMP and then transferred to the acceptor end of tRNA(Pro). As ProRS can inadvertently accommodate and process non-cognate amino acids such as alanine and cysteine, to avoid such errors it has two additional distinct editing activities against alanine. One activity is designated as 'pretransfer' editing and involves the tRNA(Pro)-independent hydrolysis of activated Ala-AMP. The other activity is designated 'posttransfer' editing and involves deacylation of mischarged Ala-tRNA(Pro). The misacylated Cys-tRNA(Pro) is not edited by ProRS. The sequence is that of Proline--tRNA ligase (proS) from Aquifex aeolicus (strain VF5).